A 502-amino-acid chain; its full sequence is Probable cytosol aminopeptidase (502 aa).

Residues Lys269 and Asp274 each coordinate Mn(2+). Residue Lys281 is part of the active site. Residues Asp292, Asp351, and Glu353 each coordinate Mn(2+). Arg355 is a catalytic residue.

It belongs to the peptidase M17 family. Mn(2+) is required as a cofactor.

It is found in the cytoplasm. The enzyme catalyses Release of an N-terminal amino acid, Xaa-|-Yaa-, in which Xaa is preferably Leu, but may be other amino acids including Pro although not Arg or Lys, and Yaa may be Pro. Amino acid amides and methyl esters are also readily hydrolyzed, but rates on arylamides are exceedingly low.. The catalysed reaction is Release of an N-terminal amino acid, preferentially leucine, but not glutamic or aspartic acids.. Its function is as follows. Presumably involved in the processing and regular turnover of intracellular proteins. Catalyzes the removal of unsubstituted N-terminal amino acids from various peptides. This is Probable cytosol aminopeptidase from Vibrio parahaemolyticus serotype O3:K6 (strain RIMD 2210633).